We begin with the raw amino-acid sequence, 555 residues long: Glutamine--tRNA ligase (555 aa).

Positions 34–44 (PEPNGYLHIGH) match the 'HIGH' region motif. Residues 35-37 (EPN) and 41-47 (HIGHAKS) each bind ATP. L-glutamine-binding residues include aspartate 67 and tyrosine 212. Residues threonine 231, 261–262 (RL), and 269–271 (MSK) contribute to the ATP site. The 'KMSKS' region motif lies at 268 to 272 (VMSKR).

This sequence belongs to the class-I aminoacyl-tRNA synthetase family. As to quaternary structure, monomer.

The protein resides in the cytoplasm. The enzyme catalyses tRNA(Gln) + L-glutamine + ATP = L-glutaminyl-tRNA(Gln) + AMP + diphosphate. The polypeptide is Glutamine--tRNA ligase (Cronobacter sakazakii (strain ATCC BAA-894) (Enterobacter sakazakii)).